The chain runs to 197 residues: Dephospho-CoA kinase (197 aa).

Residues 3–197 enclose the DPCK domain; sequence VYGLTGGIGS…QSLLHTHQNT (195 aa). Residue 11-16 coordinates ATP; it reads GSGKTT.

This sequence belongs to the CoaE family.

The protein resides in the cytoplasm. It catalyses the reaction 3'-dephospho-CoA + ATP = ADP + CoA + H(+). The protein operates within cofactor biosynthesis; coenzyme A biosynthesis; CoA from (R)-pantothenate: step 5/5. Functionally, catalyzes the phosphorylation of the 3'-hydroxyl group of dephosphocoenzyme A to form coenzyme A. This is Dephospho-CoA kinase from Hydrogenovibrio crunogenus (strain DSM 25203 / XCL-2) (Thiomicrospira crunogena).